The following is a 273-amino-acid chain: Putative phosphoenolpyruvate synthase regulatory protein (273 aa).

153-160 (GVSRSGKT) lines the ADP pocket.

This sequence belongs to the pyruvate, phosphate/water dikinase regulatory protein family. PSRP subfamily.

It carries out the reaction [pyruvate, water dikinase] + ADP = [pyruvate, water dikinase]-phosphate + AMP + H(+). The enzyme catalyses [pyruvate, water dikinase]-phosphate + phosphate + H(+) = [pyruvate, water dikinase] + diphosphate. Its function is as follows. Bifunctional serine/threonine kinase and phosphorylase involved in the regulation of the phosphoenolpyruvate synthase (PEPS) by catalyzing its phosphorylation/dephosphorylation. This Paracidovorax citrulli (strain AAC00-1) (Acidovorax citrulli) protein is Putative phosphoenolpyruvate synthase regulatory protein.